Here is a 121-residue protein sequence, read N- to C-terminus: MVNAIEAFDAKHMKPAEEIPAFRPGDTVEVNVKIKEGNNSRIQAFTGVVIARQGGGVRETFVVRKISFGTGVERRFPLHSPAIDSIKVVRKGRVRRAKLYYLRNLRGKAARIVERRDNSEK.

It belongs to the bacterial ribosomal protein bL19 family.

Functionally, this protein is located at the 30S-50S ribosomal subunit interface and may play a role in the structure and function of the aminoacyl-tRNA binding site. In Bifidobacterium adolescentis (strain ATCC 15703 / DSM 20083 / NCTC 11814 / E194a), this protein is Large ribosomal subunit protein bL19.